Reading from the N-terminus, the 397-residue chain is Argininosuccinate synthase (397 aa).

Residues 9–17 and Ala35 each bind ATP; that span reads AFSGGLDTS. 2 residues coordinate L-citrulline: Tyr88 and Ser93. Position 117 (Gly117) interacts with ATP. Thr119, Asn123, and Asp124 together coordinate L-aspartate. Asn123 provides a ligand contact to L-citrulline. Position 127 (Arg127) interacts with L-citrulline.

This sequence belongs to the argininosuccinate synthase family. Type 1 subfamily. In terms of assembly, homotetramer.

The protein resides in the cytoplasm. The enzyme catalyses L-citrulline + L-aspartate + ATP = 2-(N(omega)-L-arginino)succinate + AMP + diphosphate + H(+). Its pathway is amino-acid biosynthesis; L-arginine biosynthesis; L-arginine from L-ornithine and carbamoyl phosphate: step 2/3. The sequence is that of Argininosuccinate synthase from Xanthomonas campestris pv. campestris (strain ATCC 33913 / DSM 3586 / NCPPB 528 / LMG 568 / P 25).